The chain runs to 683 residues: DNA-directed RNA polymerase subunit beta' (683 aa).

Zn(2+) contacts are provided by C69, C71, C87, and C90. Mg(2+) is bound by residues D489, D491, and D493.

Belongs to the RNA polymerase beta' chain family. RpoC1 subfamily. In plastids the minimal PEP RNA polymerase catalytic core is composed of four subunits: alpha, beta, beta', and beta''. When a (nuclear-encoded) sigma factor is associated with the core the holoenzyme is formed, which can initiate transcription. Mg(2+) serves as cofactor. It depends on Zn(2+) as a cofactor.

Its subcellular location is the plastid. It localises to the chloroplast. It carries out the reaction RNA(n) + a ribonucleoside 5'-triphosphate = RNA(n+1) + diphosphate. Its function is as follows. DNA-dependent RNA polymerase catalyzes the transcription of DNA into RNA using the four ribonucleoside triphosphates as substrates. This chain is DNA-directed RNA polymerase subunit beta', found in Saccharum hybrid (Sugarcane).